Consider the following 353-residue polypeptide: Rhodopsin (353 aa).

The Extracellular portion of the chain corresponds to 1-36; sequence MNGTEGENFYIPFSNKTGLARSPFEYPQYYLAEPWK. Asn-2 and Asn-15 each carry an N-linked (GlcNAc...) asparagine glycan. A helical membrane pass occupies residues 37-61; it reads YSVLAAYMFFLILVGFPVNFLTLFV. Residues 62-73 are Cytoplasmic-facing; it reads TVQHKKLRTPLN. A helical transmembrane segment spans residues 74-96; it reads YILLNLAVANLFMVLFGFTLTMY. Topologically, residues 97 to 110 are extracellular; it reads SSMNGYFVFGPTMC. A disulfide bond links Cys-110 and Cys-187. A helical membrane pass occupies residues 111-133; the sequence is NFEGFFATLGGEMSLWSLVVLAI. A 'Ionic lock' involved in activated form stabilization motif is present at residues 134–136; it reads ERY. Topologically, residues 134–152 are cytoplasmic; sequence ERYIVICKPMGNFRFGSTH. The chain crosses the membrane as a helical span at residues 153 to 173; the sequence is AYMGVAFTWFMALSCAAPPLV. Topologically, residues 174–202 are extracellular; the sequence is GWSRYLPEGMQCSCGPDYYTLNPNFNNES. Residues 203-224 traverse the membrane as a helical segment; it reads FVIYMFLVHFIIPFIVIFFCYG. Topologically, residues 225–252 are cytoplasmic; it reads RLLCTVKEAAAAQQESASTQKAEKEVTR. Residues 253 to 274 form a helical membrane-spanning segment; the sequence is MVVLMVIGFLVCWVPYASVAFY. Residues 275–286 are Extracellular-facing; the sequence is IFTHQGSDFGAT. The helical transmembrane segment at 287-308 threads the bilayer; that stretch reads FMTVPAFFAKTSALYNPIIYIL. An N6-(retinylidene)lysine modification is found at Lys-296. The Cytoplasmic portion of the chain corresponds to 309 to 353; sequence MNKQFRNCMITTLCCGKNPLGDEDSGASTSKTEVSSVSTSQVSPA. The tract at residues 330 to 353 is disordered; sequence DEDSGASTSKTEVSSVSTSQVSPA. Low complexity predominate over residues 336–353; the sequence is STSKTEVSSVSTSQVSPA.

The protein belongs to the G-protein coupled receptor 1 family. Opsin subfamily. Phosphorylated on some or all of the serine and threonine residues present in the C-terminal region. Post-translationally, contains one covalently linked retinal chromophore.

The protein resides in the membrane. Its subcellular location is the cell projection. It localises to the cilium. The protein localises to the photoreceptor outer segment. Photoreceptor required for image-forming vision at low light intensity. While most salt water fish species use retinal as chromophore, most freshwater fish use 3-dehydroretinal, or a mixture of retinal and 3-dehydroretinal. Light-induced isomerization of 11-cis to all-trans retinal triggers a conformational change that activates signaling via G-proteins. Subsequent receptor phosphorylation mediates displacement of the bound G-protein alpha subunit by arrestin and terminates signaling. The chain is Rhodopsin (RHO) from Petromyzon marinus (Sea lamprey).